Consider the following 59-residue polypeptide: MFAGLPSLIHEQQQKAVERIQELMAQGMSSGQAIALVAEELRANHSGELIVARFEDEDE.

It belongs to the UPF0181 family.

This chain is UPF0181 protein YoaH, found in Shigella flexneri.